Reading from the N-terminus, the 342-residue chain is Pre-mRNA-splicing factor 18 (342 aa).

The protein belongs to the PRP18 family. In terms of assembly, interacts with the spliceosome. Part of a complex containing U4/U6 snRNPs.

It localises to the nucleus speckle. In terms of biological role, participates in the second step of pre-mRNA splicing. This Danio rerio (Zebrafish) protein is Pre-mRNA-splicing factor 18 (prpf18).